Here is a 137-residue protein sequence, read N- to C-terminus: Putative pre-16S rRNA nuclease (137 aa).

The protein belongs to the YqgF nuclease family.

It is found in the cytoplasm. Functionally, could be a nuclease involved in processing of the 5'-end of pre-16S rRNA. This Bacillus mycoides (strain KBAB4) (Bacillus weihenstephanensis) protein is Putative pre-16S rRNA nuclease.